A 305-amino-acid polypeptide reads, in one-letter code: Ribosomal RNA small subunit methyltransferase H (305 aa).

S-adenosyl-L-methionine is bound by residues 30-32, D49, F74, D96, and Q103; that span reads GGH.

The protein belongs to the methyltransferase superfamily. RsmH family.

The protein localises to the cytoplasm. The enzyme catalyses cytidine(1402) in 16S rRNA + S-adenosyl-L-methionine = N(4)-methylcytidine(1402) in 16S rRNA + S-adenosyl-L-homocysteine + H(+). Its function is as follows. Specifically methylates the N4 position of cytidine in position 1402 (C1402) of 16S rRNA. This Francisella tularensis subsp. novicida (strain U112) protein is Ribosomal RNA small subunit methyltransferase H.